An 85-amino-acid chain; its full sequence is Neurotoxin 60.35 (85 aa).

Positions 1 to 23 (MKFCVAVSLLIIASMAGVISVSG) are cleaved as a signal peptide. The LCN-type CS-alpha/beta domain maps to 24 to 85 (YDVYPRDYAG…NFLSVIWKQC (62 aa)). 3 disulfide bridges follow: C38–C60, C46–C65, and C50–C67.

This sequence belongs to the long (3 C-C) scorpion toxin superfamily. Expressed by the venom gland.

The protein localises to the secreted. This is Neurotoxin 60.35 from Lychas mucronatus (Chinese swimming scorpion).